The chain runs to 596 residues: Elongation factor 4 (596 aa).

A tr-type G domain is found at 2–183 (NNIRNFSIIA…TIIRKIPPPK (182 aa)). Residues 14–19 (DHGKST) and 130–133 (NKID) contribute to the GTP site.

This sequence belongs to the TRAFAC class translation factor GTPase superfamily. Classic translation factor GTPase family. LepA subfamily.

Its subcellular location is the cell inner membrane. It catalyses the reaction GTP + H2O = GDP + phosphate + H(+). Functionally, required for accurate and efficient protein synthesis under certain stress conditions. May act as a fidelity factor of the translation reaction, by catalyzing a one-codon backward translocation of tRNAs on improperly translocated ribosomes. Back-translocation proceeds from a post-translocation (POST) complex to a pre-translocation (PRE) complex, thus giving elongation factor G a second chance to translocate the tRNAs correctly. Binds to ribosomes in a GTP-dependent manner. The protein is Elongation factor 4 of Campylobacter fetus subsp. fetus (strain 82-40).